The primary structure comprises 133 residues: MASGQQERSELDRMAREGETVVPGGTGGKTLEAQEHLAEGRSRGGQTRKDQLGEEGYREMGHKGGETRKEQLGEEGYREMGHKGGETRKEQMGEEGYHEMGRKGGLSTMEESGGERAAREGIDIDESKFKTKS.

Positions 1 to 133 are disordered; it reads MASGQQERSE…IDESKFKTKS (133 aa). Basic and acidic residues-rich tracts occupy residues 7–19, 32–102, and 113–133; these read ERSE…REGE, EAQE…EMGR, and GGER…KTKS. Repeat copies occupy residues 24 to 43, 44 to 63, and 64 to 83. A 3 X 20 AA tandem repeats region spans residues 24–83; sequence GGTGGKTLEAQEHLAEGRSRGGQTRKDQLGEEGYREMGHKGGETRKEQLGEEGYREMGHK.

The protein belongs to the small hydrophilic plant seed protein family.

Functionally, lea proteins are late embryonic proteins abundant in higher plant seed embryos. The chain is Late embryogenesis abundant protein B19.3 (B19.3) from Hordeum vulgare (Barley).